The sequence spans 210 residues: Probable glutathione peroxidase 8 (210 aa).

Residues 21 to 40 (VLLSMTVGVGCLLLLQTQLL) traverse the membrane as a helical segment.

It belongs to the glutathione peroxidase family.

It is found in the membrane. It carries out the reaction 2 glutathione + H2O2 = glutathione disulfide + 2 H2O. In Tetraodon nigroviridis (Spotted green pufferfish), this protein is Probable glutathione peroxidase 8 (gpx8).